The primary structure comprises 394 residues: NAD(P)H-quinone oxidoreductase subunit H (394 aa).

The protein belongs to the complex I 49 kDa subunit family. As to quaternary structure, NDH-1 can be composed of about 15 different subunits; different subcomplexes with different compositions have been identified which probably have different functions.

It is found in the cellular thylakoid membrane. The catalysed reaction is a plastoquinone + NADH + (n+1) H(+)(in) = a plastoquinol + NAD(+) + n H(+)(out). The enzyme catalyses a plastoquinone + NADPH + (n+1) H(+)(in) = a plastoquinol + NADP(+) + n H(+)(out). In terms of biological role, NDH-1 shuttles electrons from an unknown electron donor, via FMN and iron-sulfur (Fe-S) centers, to quinones in the respiratory and/or the photosynthetic chain. The immediate electron acceptor for the enzyme in this species is believed to be plastoquinone. Couples the redox reaction to proton translocation, and thus conserves the redox energy in a proton gradient. Cyanobacterial NDH-1 also plays a role in inorganic carbon-concentration. In Prochlorococcus marinus (strain MIT 9313), this protein is NAD(P)H-quinone oxidoreductase subunit H.